Consider the following 157-residue polypeptide: SsrA-binding protein (157 aa).

This sequence belongs to the SmpB family.

The protein resides in the cytoplasm. Required for rescue of stalled ribosomes mediated by trans-translation. Binds to transfer-messenger RNA (tmRNA), required for stable association of tmRNA with ribosomes. tmRNA and SmpB together mimic tRNA shape, replacing the anticodon stem-loop with SmpB. tmRNA is encoded by the ssrA gene; the 2 termini fold to resemble tRNA(Ala) and it encodes a 'tag peptide', a short internal open reading frame. During trans-translation Ala-aminoacylated tmRNA acts like a tRNA, entering the A-site of stalled ribosomes, displacing the stalled mRNA. The ribosome then switches to translate the ORF on the tmRNA; the nascent peptide is terminated with the 'tag peptide' encoded by the tmRNA and targeted for degradation. The ribosome is freed to recommence translation, which seems to be the essential function of trans-translation. The polypeptide is SsrA-binding protein (Limosilactobacillus fermentum (strain NBRC 3956 / LMG 18251) (Lactobacillus fermentum)).